The primary structure comprises 410 residues: Dipeptidase 1 (410 aa).

An N-terminal signal peptide occupies residues 1–16; sequence MWTSWWLWPLVAVCTA. Residues H36 and D38 each contribute to the Zn(2+) site. N57 is a glycosylation site (N-linked (GlcNAc...) asparagine). Cysteines 87 and 170 form a disulfide. A Zn(2+)-binding site is contributed by E141. Residue H168 participates in substrate binding. Residues H214 and H235 each coordinate Zn(2+). C242 and C274 are joined by a disulfide. Residues R246 and D304 each coordinate substrate. Residue S384 is the site of GPI-anchor amidated serine attachment. The propeptide at 385–410 is removed in mature form; it reads EAPSLHRRPGALLASLSLLLLSLGLL.

The protein belongs to the metallo-dependent hydrolases superfamily. Peptidase M19 family. Homodimer; disulfide-linked. The cofactor is Zn(2+).

It is found in the apical cell membrane. It localises to the cell projection. Its subcellular location is the microvillus membrane. It catalyses the reaction an L-aminoacyl-L-amino acid + H2O = 2 an L-alpha-amino acid. It carries out the reaction leukotriene D4 + H2O = leukotriene E4 + glycine. The enzyme catalyses L-cystine-bis-glycine + 2 H2O = L-cystine + 2 glycine. The catalysed reaction is a beta-lactam + H2O = a substituted beta-amino acid. It catalyses the reaction glycyldehydrophenylalanine + H2O = 2,3-didehydrophenylalanine + glycine. Its activity is regulated as follows. Inhibited by L-penicillamine. Beta-lactamase activity is inhibited by cilastatin. Hydrolyzes a wide range of dipeptides including the conversion of leukotriene D4 to leukotriene E4. Hydrolyzes cystinyl-bis-glycine (cys-bis-gly) formed during glutathione degradation. Also possesses beta lactamase activity and hydrolytically inactivates beta-lactam antibiotics. Functionally, independently of its dipeptidase activity, acts as an adhesion receptor for neutrophil recruitment from bloodstream into inflamed lungs and liver. The protein is Dipeptidase 1 (DPEP1) of Oryctolagus cuniculus (Rabbit).